A 96-amino-acid chain; its full sequence is Protein RnfH (96 aa).

Belongs to the UPF0125 (RnfH) family.

In Escherichia coli O139:H28 (strain E24377A / ETEC), this protein is Protein RnfH.